Reading from the N-terminus, the 350-residue chain is MNELDSLVESARQRFAQSTSPADLENAKAQFLGKSGRVTELMKGMAQLCVAEKKTRGAAINLAKQAIEAALNARRQALADAQLQQQLTADALDVSLPGRQRGQGGLHPVSLTLERIEGLFGSMGFDVADGPEIETDWFNFTALNTPEDHPARSMHDTFYVEGGTAGAPNLLRTHTSPMQIRHAVQHVKAHRAALDAGQPMPEIRVIAPGRAYRIDSDATHSPMFHQCEGLWIGENVGFKDLKVIFTGFCRRFFESDDLVLRFRPSFFPFTEPSAEIDIRFQTGPLAGRWLEVAGSGQVHPNVVRNMGLDPEKYIGFAFGMGLDRLTMLRYGVSDLRLFFDGDIRFLSQFR.

E271 is a binding site for Mg(2+).

Belongs to the class-II aminoacyl-tRNA synthetase family. Phe-tRNA synthetase alpha subunit type 1 subfamily. Tetramer of two alpha and two beta subunits. Mg(2+) is required as a cofactor.

It is found in the cytoplasm. The enzyme catalyses tRNA(Phe) + L-phenylalanine + ATP = L-phenylalanyl-tRNA(Phe) + AMP + diphosphate + H(+). The protein is Phenylalanine--tRNA ligase alpha subunit of Verminephrobacter eiseniae (strain EF01-2).